Consider the following 96-residue polypeptide: MQNTTHDNVILELTVRNHPGVMTHVCGLFARRAFNVEGILCLPIQDSDKSHIWLLVNDDQRLEQMISQIDKLEDVVKVQRNQSDPTMFNKIAVFFQ.

Residues 10-83 enclose the ACT domain; that stretch reads ILELTVRNHP…DVVKVQRNQS (74 aa).

This sequence belongs to the acetolactate synthase small subunit family. In terms of assembly, dimer of large and small chains.

It carries out the reaction 2 pyruvate + H(+) = (2S)-2-acetolactate + CO2. The protein operates within amino-acid biosynthesis; L-isoleucine biosynthesis; L-isoleucine from 2-oxobutanoate: step 1/4. It participates in amino-acid biosynthesis; L-valine biosynthesis; L-valine from pyruvate: step 1/4. The protein is Acetolactate synthase isozyme 1 small subunit (ilvN) of Escherichia coli O157:H7.